A 202-amino-acid chain; its full sequence is UPF0301 protein BCG_0069 (202 aa).

Belongs to the UPF0301 (AlgH) family.

This Mycobacterium bovis (strain BCG / Pasteur 1173P2) protein is UPF0301 protein BCG_0069.